The sequence spans 664 residues: Zinc finger protein 710 (664 aa).

Glycyl lysine isopeptide (Lys-Gly) (interchain with G-Cter in SUMO2) cross-links involve residues lysine 110 and lysine 113. Residues 121–141 (VYEVSVPGDDKDAGPAEAPAE) are disordered. 3 C2H2-type zinc fingers span residues 295-317 (WQCRMCEKSYTSKYNLVTHILGH), 323-345 (HSCPHCSKLFKQPSHLQTHLLTH), and 351-373 (HKCQVCHKAFTQTSHLKRHMLLH). Residue lysine 377 forms a Glycyl lysine isopeptide (Lys-Gly) (interchain with G-Cter in SUMO2) linkage. C2H2-type zinc fingers lie at residues 379 to 401 (YSCHFCGRGFAYPSELKAHEVKH), 407 to 429 (HVCVECGLDFSTLTQLKRHLASH), 435 to 457 (YQCLECDKSFHYRSQLQNHMLKH), 463 to 485 (FVCTECGMEFSQIHHLKQHSLTH), 491 to 513 (FKCEVCGREFTLQANMKRHMLIH), 519 to 541 (YQCHICFKTFVQKQTLKTHMIVH), 547 to 569 (FKCKVCGKSFNRMYNLLGHMHLH), and 575 to 598 (FKCPYCSSKFNLKGNLSRHMKVKH).

It belongs to the krueppel C2H2-type zinc-finger protein family.

Its subcellular location is the nucleus. May be involved in transcriptional regulation. The protein is Zinc finger protein 710 (ZNF710) of Homo sapiens (Human).